The following is a 72-amino-acid chain: MAKEDTIQMQGEVLENLPSATFKIKLENGHVVLGHISGKMRMHYIRILPGDKVTVELTPYDLSRARIVFRAK.

The region spanning 1–72 (MAKEDTIQMQ…SRARIVFRAK (72 aa)) is the S1-like domain.

The protein belongs to the IF-1 family. In terms of assembly, component of the 30S ribosomal translation pre-initiation complex which assembles on the 30S ribosome in the order IF-2 and IF-3, IF-1 and N-formylmethionyl-tRNA(fMet); mRNA recruitment can occur at any time during PIC assembly.

The protein localises to the cytoplasm. Its function is as follows. One of the essential components for the initiation of protein synthesis. Stabilizes the binding of IF-2 and IF-3 on the 30S subunit to which N-formylmethionyl-tRNA(fMet) subsequently binds. Helps modulate mRNA selection, yielding the 30S pre-initiation complex (PIC). Upon addition of the 50S ribosomal subunit IF-1, IF-2 and IF-3 are released leaving the mature 70S translation initiation complex. The sequence is that of Translation initiation factor IF-1 2 from Chromobacterium violaceum (strain ATCC 12472 / DSM 30191 / JCM 1249 / CCUG 213 / NBRC 12614 / NCIMB 9131 / NCTC 9757 / MK).